Reading from the N-terminus, the 156-residue chain is Transcription antitermination protein NusB (156 aa).

This sequence belongs to the NusB family.

In terms of biological role, involved in transcription antitermination. Required for transcription of ribosomal RNA (rRNA) genes. Binds specifically to the boxA antiterminator sequence of the ribosomal RNA (rrn) operons. The chain is Transcription antitermination protein NusB from Mycobacterium bovis (strain ATCC BAA-935 / AF2122/97).